Reading from the N-terminus, the 282-residue chain is Protein NEOXANTHIN-DEFICIENT 1 (282 aa).

Its function is as follows. Required for neoxanthin biosynthesis. Probably not involved directly in the enzymatic conversion of violaxanthin to neoxanthin. Is necessary but not sufficient for neoxanthin synthesis. The protein is Protein NEOXANTHIN-DEFICIENT 1 of Arabidopsis thaliana (Mouse-ear cress).